A 799-amino-acid chain; its full sequence is ATP-dependent DNA helicase Hel308 (799 aa).

Residues Gln-29 and 47-54 each bind ATP; that span reads IPTASGKT. The Helicase ATP-binding domain maps to 34 to 200; that stretch reads EAGVTEGENL…WLDAGLVDSD (167 aa). The short motif at 145 to 148 is the DEAH box element; it reads DEVH. The region spanning 234–435 is the Helicase C-terminal domain; that stretch reads QTAAIVRDTL…EPALRTHILA (202 aa). 2 disordered regions span residues 522–566 and 750–799; these read RGAS…DRDP and NVLE…LGDF. Residues 553-566 show a composition bias toward acidic residues; sequence LAEDADESDADRDP.

The protein belongs to the helicase family. Hel308 subfamily. Monomer.

It carries out the reaction Couples ATP hydrolysis with the unwinding of duplex DNA by translocating in the 3'-5' direction.. The enzyme catalyses ATP + H2O = ADP + phosphate + H(+). Its function is as follows. DNA-dependent ATPase and 3'-5' DNA helicase that may be involved in repair of stalled replication forks. The chain is ATP-dependent DNA helicase Hel308 from Haloarcula marismortui (strain ATCC 43049 / DSM 3752 / JCM 8966 / VKM B-1809) (Halobacterium marismortui).